The primary structure comprises 419 residues: RING finger protein 150 (419 aa).

The first 34 residues, Met-1–Ala-34, serve as a signal peptide directing secretion. Residues Glu-35–Ser-197 lie on the Extracellular side of the membrane. In terms of domain architecture, PA spans Ser-70–Met-172. A helical membrane pass occupies residues Val-198–Phe-218. Topologically, residues Tyr-219–Cys-419 are cytoplasmic. The segment at Cys-267–Lys-308 adopts an RING-type; atypical zinc-finger fold. The segment at Ser-374–Cys-419 is disordered. Positions Pro-376–Ala-405 are enriched in polar residues.

The protein resides in the membrane. In Danio rerio (Zebrafish), this protein is RING finger protein 150 (rnf150).